The primary structure comprises 151 residues: Small ribosomal subunit protein uS11 (151 aa).

The interval 130–151 (EDVTPIPSDSTRRKGGRRGRRL) is disordered. Residues 142–151 (RKGGRRGRRL) show a composition bias toward basic residues.

The protein belongs to the universal ribosomal protein uS11 family.

The polypeptide is Small ribosomal subunit protein uS11 (Aedes aegypti (Yellowfever mosquito)).